The following is a 220-amino-acid chain: Chaperone protein TorD (220 aa).

The protein belongs to the TorD/DmsD family. TorD subfamily.

It localises to the cytoplasm. Functionally, involved in the biogenesis of TorA. Acts on TorA before the insertion of the molybdenum cofactor and, as a result, probably favors a conformation of the apoenzyme that is competent for acquiring the cofactor. This Vibrio cholerae serotype O1 (strain ATCC 39315 / El Tor Inaba N16961) protein is Chaperone protein TorD.